The following is a 445-amino-acid chain: UPF0210 protein SPG_0223 (445 aa).

It belongs to the UPF0210 family. In terms of assembly, homodimer.

The protein is UPF0210 protein SPG_0223 of Streptococcus pneumoniae serotype 19F (strain G54).